We begin with the raw amino-acid sequence, 125 residues long: Fluoride-specific ion channel FluC (125 aa).

The next 4 helical transmembrane spans lie at 2-22, 35-55, 68-88, and 98-118; these read WLSILAIFCGAGLGALLRTGF, LGTLISNMVGGYLIGIALAFF, LIITGFLGGLTTFSSFSAEVV, and WALGTALLHLVGSLVLTLLGI. Residues G75 and T78 each coordinate Na(+).

The protein belongs to the fluoride channel Fluc/FEX (TC 1.A.43) family.

The protein resides in the cell inner membrane. It catalyses the reaction fluoride(in) = fluoride(out). Na(+) is not transported, but it plays an essential structural role and its presence is essential for fluoride channel function. In terms of biological role, fluoride-specific ion channel. Important for reducing fluoride concentration in the cell, thus reducing its toxicity. The chain is Fluoride-specific ion channel FluC from Polynucleobacter asymbioticus (strain DSM 18221 / CIP 109841 / QLW-P1DMWA-1) (Polynucleobacter necessarius subsp. asymbioticus).